A 248-amino-acid chain; its full sequence is Superoxide dismutase [Mn] 1 (248 aa).

The first 41 residues, 1–41 (MQTTFRRILILFVGLLVPLFFACQSNSQVDAAPSAAPQLSA), serve as a signal peptide directing secretion. The Mn(2+) site is built by H68, H123, D208, and H212.

This sequence belongs to the iron/manganese superoxide dismutase family. In terms of assembly, homodimer. Mn(2+) is required as a cofactor.

The enzyme catalyses 2 superoxide + 2 H(+) = H2O2 + O2. Destroys superoxide anion radicals which are normally produced within the cells and which are toxic to biological systems. This is Superoxide dismutase [Mn] 1 (sodA1) from Leptolyngbya boryana (Plectonema boryanum).